The chain runs to 93 residues: Large ribosomal subunit protein uL23cz/uL23cy (93 aa).

This sequence belongs to the universal ribosomal protein uL23 family. In terms of assembly, part of the 50S ribosomal subunit.

The protein resides in the plastid. The protein localises to the chloroplast. Functionally, binds to 23S rRNA. This is Large ribosomal subunit protein uL23cz/uL23cy (rpl23-A) from Citrus sinensis (Sweet orange).